The sequence spans 103 residues: Large ribosomal subunit protein bL21 (103 aa).

Belongs to the bacterial ribosomal protein bL21 family. In terms of assembly, part of the 50S ribosomal subunit. Contacts protein L20.

Its function is as follows. This protein binds to 23S rRNA in the presence of protein L20. This chain is Large ribosomal subunit protein bL21, found in Yersinia enterocolitica serotype O:8 / biotype 1B (strain NCTC 13174 / 8081).